Reading from the N-terminus, the 69-residue chain is Small ribosomal subunit protein uS7 (69 aa).

It belongs to the universal ribosomal protein uS7 family. In terms of assembly, part of the 30S ribosomal subunit.

One of the primary rRNA binding proteins, it binds directly to 16S rRNA where it nucleates assembly of the head domain of the 30S subunit. Is located at the subunit interface close to the decoding center. This chain is Small ribosomal subunit protein uS7 (rps7), found in Methanococcoides methylutens.